The primary structure comprises 596 residues: Beta-fructofuranosidase, insoluble isoenzyme 7 (596 aa).

A signal peptide spans 1–24 (MARLGLAVCAASFHLFLLLASTSS). Substrate is bound by residues 51-54 (WQND), glutamine 70, and tryptophan 78. Aspartate 54 is a catalytic residue. An N-linked (GlcNAc...) asparagine glycan is attached at asparagine 82. Residues 115-116 (WS), 179-180 (RD), and glutamate 234 contribute to the substrate site. A glycan (N-linked (GlcNAc...) asparagine) is linked at asparagine 330. Residues cysteine 432 and cysteine 478 are joined by a disulfide bond. An N-linked (GlcNAc...) asparagine glycan is attached at asparagine 552.

This sequence belongs to the glycosyl hydrolase 32 family.

It is found in the secreted. It localises to the extracellular space. The protein resides in the apoplast. Its subcellular location is the cell wall. The catalysed reaction is Hydrolysis of terminal non-reducing beta-D-fructofuranoside residues in beta-D-fructofuranosides.. Functionally, may play a role in sucrose partitioning during seed development. This Oryza sativa subsp. indica (Rice) protein is Beta-fructofuranosidase, insoluble isoenzyme 7 (CIN7).